The primary structure comprises 555 residues: Glucose-6-phosphate isomerase (555 aa).

E356 functions as the Proton donor in the catalytic mechanism. Active-site residues include H387 and K515.

The protein belongs to the GPI family.

It localises to the cytoplasm. It carries out the reaction alpha-D-glucose 6-phosphate = beta-D-fructose 6-phosphate. It participates in carbohydrate biosynthesis; gluconeogenesis. The protein operates within carbohydrate degradation; glycolysis; D-glyceraldehyde 3-phosphate and glycerone phosphate from D-glucose: step 2/4. Catalyzes the reversible isomerization of glucose-6-phosphate to fructose-6-phosphate. This Desulforapulum autotrophicum (strain ATCC 43914 / DSM 3382 / VKM B-1955 / HRM2) (Desulfobacterium autotrophicum) protein is Glucose-6-phosphate isomerase.